We begin with the raw amino-acid sequence, 311 residues long: Ribosomal protein L11 methyltransferase (311 aa).

T160, G181, D203, and N246 together coordinate S-adenosyl-L-methionine.

The protein belongs to the methyltransferase superfamily. PrmA family.

It localises to the cytoplasm. The enzyme catalyses L-lysyl-[protein] + 3 S-adenosyl-L-methionine = N(6),N(6),N(6)-trimethyl-L-lysyl-[protein] + 3 S-adenosyl-L-homocysteine + 3 H(+). Methylates ribosomal protein L11. The chain is Ribosomal protein L11 methyltransferase from Macrococcus caseolyticus (strain JCSC5402) (Macrococcoides caseolyticum).